The sequence spans 148 residues: Small ribosomal subunit protein bS6 (148 aa).

A disordered region spans residues 96–148 (HEEGQSAMLTRRDDRRERDGDDRPRRREGGFDRGDRGDRGPRRPRDNEAGEGA).

Belongs to the bacterial ribosomal protein bS6 family.

Functionally, binds together with bS18 to 16S ribosomal RNA. This chain is Small ribosomal subunit protein bS6, found in Brucella melitensis biotype 1 (strain ATCC 23456 / CCUG 17765 / NCTC 10094 / 16M).